Reading from the N-terminus, the 330-residue chain is Ketol-acid reductoisomerase (NADP(+)) (330 aa).

Residues 1–181 (MNAYYEQDAD…GGTKAGVIET (181 aa)) enclose the KARI N-terminal Rossmann domain. Residues 24 to 27 (FGSQ), R47, S50, S52, and 82 to 85 (DQYQ) contribute to the NADP(+) site. The active site involves H107. G133 provides a ligand contact to NADP(+). A KARI C-terminal knotted domain is found at 182-327 (TFKNETETDL…AKLRDMMSWL (146 aa)). Residues D190, E194, E226, and E230 each coordinate Mg(2+). S251 is a binding site for substrate.

It belongs to the ketol-acid reductoisomerase family. Requires Mg(2+) as cofactor.

It carries out the reaction (2R)-2,3-dihydroxy-3-methylbutanoate + NADP(+) = (2S)-2-acetolactate + NADPH + H(+). It catalyses the reaction (2R,3R)-2,3-dihydroxy-3-methylpentanoate + NADP(+) = (S)-2-ethyl-2-hydroxy-3-oxobutanoate + NADPH + H(+). It functions in the pathway amino-acid biosynthesis; L-isoleucine biosynthesis; L-isoleucine from 2-oxobutanoate: step 2/4. Its pathway is amino-acid biosynthesis; L-valine biosynthesis; L-valine from pyruvate: step 2/4. Involved in the biosynthesis of branched-chain amino acids (BCAA). Catalyzes an alkyl-migration followed by a ketol-acid reduction of (S)-2-acetolactate (S2AL) to yield (R)-2,3-dihydroxy-isovalerate. In the isomerase reaction, S2AL is rearranged via a Mg-dependent methyl migration to produce 3-hydroxy-3-methyl-2-ketobutyrate (HMKB). In the reductase reaction, this 2-ketoacid undergoes a metal-dependent reduction by NADPH to yield (R)-2,3-dihydroxy-isovalerate. This chain is Ketol-acid reductoisomerase (NADP(+)), found in Chlorobium phaeobacteroides (strain BS1).